Consider the following 326-residue polypeptide: Glycine N(alpha)-acyltransferase (326 aa).

The protein belongs to the acetyltransferase family.

The catalysed reaction is a (3R)-hydroxyacyl-[ACP] + glycine = a lyso-glycine lipid + holo-[ACP] + H(+). It catalyses the reaction (3R)-hydroxyhexadecanoyl-[ACP] + glycine = N-[(3R)-3-hydroxyhexadecanoyl]-glycine + holo-[ACP] + H(+). It participates in lipid metabolism. Is involved in the production of glycine lipids (GL), which are phosphorus-free membrane lipids. Catalyzes the first step of GL biosynthesis, i.e. the N-acylation of glycine via addition of a 3-hydroxy fatty acyl group, to form a range of monoacylated glycine (also named lyso-glycine lipids or lyso-GL). As an example, catalyzes the production of commendamide, an N-acylated (3-OH C16:0) derivative of glycine with hemolytic activity and the ability to solubilize cholesterol micelles; this compound can also activate NF-kB through the G-protein coupled receptor GPCR G2A/132. The sequence is that of Glycine N(alpha)-acyltransferase from Phocaeicola vulgatus (strain ATCC 8482 / DSM 1447 / JCM 5826 / CCUG 4940 / NBRC 14291 / NCTC 11154) (Bacteroides vulgatus).